Consider the following 201-residue polypeptide: Cutinase (201 aa).

The first 20 residues, 1–20 (MKTSAQQLLSLLLLPLSAIA), serve as a signal peptide directing secretion. Cys-31 and Cys-105 form a disulfide bridge. The active-site Nucleophile is the Ser-116. Cys-164 and Cys-171 are disulfide-bonded. Asp-168 is a catalytic residue. The active-site Proton donor/acceptor is His-181.

The protein belongs to the cutinase family. In terms of processing, the 2 disulfide bonds play a critical role in holding the catalytic residues in juxta-position; reduction of the disulfide bridges results in the complete inactivation of the enzyme.

It is found in the secreted. It carries out the reaction cutin + H2O = cutin monomers.. Its function is as follows. Catalyzes the hydrolysis of complex carboxylic polyesters found in the cell wall of plants. Degrades cutin, a macromolecule that forms the structure of the plant cuticle. Allows pathogenic fungi to penetrate through the cuticular barrier into the host plant during the initial stage of fungal infection. The protein is Cutinase (CUT1) of Monilinia fructicola (Brown rot fungus).